The following is a 255-amino-acid chain: Type III pantothenate kinase (255 aa).

An ATP-binding site is contributed by 6 to 13 (DVGNTNTV). 108–111 (GADR) contacts substrate. Asp-110 serves as the catalytic Proton acceptor. Asp-130 provides a ligand contact to K(+). ATP is bound at residue Thr-133. Residue Thr-185 participates in substrate binding.

The protein belongs to the type III pantothenate kinase family. Homodimer. It depends on NH4(+) as a cofactor. Requires K(+) as cofactor.

The protein localises to the cytoplasm. The catalysed reaction is (R)-pantothenate + ATP = (R)-4'-phosphopantothenate + ADP + H(+). It participates in cofactor biosynthesis; coenzyme A biosynthesis; CoA from (R)-pantothenate: step 1/5. Its function is as follows. Catalyzes the phosphorylation of pantothenate (Pan), the first step in CoA biosynthesis. This Hyphomonas neptunium (strain ATCC 15444) protein is Type III pantothenate kinase.